The sequence spans 448 residues: Zinc finger and BTB domain-containing protein 14 (448 aa).

The 67-residue stretch at 36-102 (CDIAIVVEDV…MYTAKISVKK (67 aa)) folds into the BTB domain. Positions 50 to 66 (HRCVLAACSTYFKKLFK) match the Nuclear localization signal motif. Residues 130–193 (VSSPEENTQS…QEDGKSPTTT (64 aa)) form a disordered region. Acidic residues predominate over residues 156–167 (DTQDDEVEEIGD). C2H2-type zinc fingers lie at residues 275-302 (IVCQACGKTFSDEARLRKHEKLHTADRP), 303-330 (FVCEMCTKGFTTQAHLKEHLKIHTGYKP), 331-358 (YSCEVCGKSFIRAPDLKKHERVHSNERP), 359-386 (FACHMCDKAFKHKSHLKDHERRHRGEKP), and 387-415 (FVCGSCTKAFAKASDLKRHENNMHSERKQ). The span at 404-415 (RHENNMHSERKQ) shows a compositional bias: basic and acidic residues. Positions 404–425 (RHENNMHSERKQVTTANSIQSE) are disordered. Residues 416–425 (VTTANSIQSE) show a composition bias toward polar residues.

It belongs to the krueppel C2H2-type zinc-finger protein family. As to quaternary structure, interacts with ZBTB21.

It is found in the nucleus. Functionally, transcriptional activator of the dopamine transporter (DAT), binding it's promoter at the consensus sequence 5'-CCTGCACAGTTCACGGA-3'. Binds to 5'-d(GCC)(n)-3' trinucleotide repeats in promoter regions and acts as a repressor of the FMR1 gene. Transcriptional repressor of MYC and thymidine kinase promoters. In Gallus gallus (Chicken), this protein is Zinc finger and BTB domain-containing protein 14 (ZBTB14).